The chain runs to 571 residues: FAD-linked oxidoreductase patO (571 aa).

The signal sequence occupies residues 1–23; sequence MRLHQSPPRLLVCILSVLQVSAG. N-linked (GlcNAc...) asparagine glycosylation is found at asparagine 47, asparagine 101, asparagine 125, asparagine 179, asparagine 341, asparagine 374, asparagine 380, asparagine 421, asparagine 445, and asparagine 480. Residues 115 to 294 enclose the FAD-binding PCMH-type domain; the sequence is TLGAMVRYAV…YAVTVKTFPD (180 aa).

This sequence belongs to the oxygen-dependent FAD-linked oxidoreductase family. Requires FAD as cofactor.

Its subcellular location is the vacuole lumen. It participates in mycotoxin biosynthesis; patulin biosynthesis. In terms of biological role, FAD-linked oxidoreductase; part of the gene cluster that mediates the biosynthesis of patulin, an acetate-derived tetraketide mycotoxin produced by several fungal species that shows antimicrobial properties against several bacteria. PatO acts with patJ in the vacuole to convert gentisyl alcohol to isoepoxydon. The pathway begins with the synthesis of 6-methylsalicylic acid by the polyketide synthase (PKS) patK via condensation of acetate and malonate units. The 6-methylsalicylic acid decarboxylase patG then catalyzes the decarboxylation of 6-methylsalicylic acid to yield m-cresol (also known as 3-methylphenol). These first reactions occur in the cytosol. The intermediate m-cresol is then transported into the endoplasmic reticulum where the cytochrome P450 monooxygenase patH converts it to m-hydroxybenzyl alcohol, which is further converted to gentisyl alcohol by the cytochrome P450 monooxygenase patI. The oxidoreductases patJ and patO further convert gentisyl alcohol to isoepoxydon in the vacuole. PatN catalyzes then the transformation of isoepoxydon into phyllostine. The cluster protein patF is responsible for the conversion from phyllostine to neopatulin whereas the alcohol dehydrogenase patD converts neopatulin to E-ascladiol. The steps between isoepoxydon and E-ascladiol occur in the cytosol, and E-ascladiol is probably secreted to the extracellular space by one of the cluster-specific transporters patC or patM. Finally, the secreted patulin synthase patE catalyzes the conversion of E-ascladiol to patulin. The chain is FAD-linked oxidoreductase patO from Penicillium expansum (Blue mold rot fungus).